The following is a 261-amino-acid chain: Small ribosomal subunit protein uS2 (261 aa).

The protein belongs to the universal ribosomal protein uS2 family.

The sequence is that of Small ribosomal subunit protein uS2 from Rhodospirillum centenum (strain ATCC 51521 / SW).